Consider the following 165-residue polypeptide: Leukotoxin-activating lysine-acyltransferase LktC (165 aa).

Catalysis depends on residues His22 and Asp91.

The protein belongs to the RTX toxin acyltransferase family.

The protein localises to the cytoplasm. It carries out the reaction a fatty acyl-[ACP] + L-lysyl-[protein] = N(6)-(fatty acyl)-L-lysyl-[protein] + holo-[ACP] + H(+). Functionally, involved in fatty acylation of the protoxin (LktA) at two internal lysine residues, thereby converting it to the active toxin. This is Leukotoxin-activating lysine-acyltransferase LktC (lktC) from Pasteurella haemolytica-like sp. (strain 5943B).